Here is a 261-residue protein sequence, read N- to C-terminus: Lysosome-associated membrane glycoprotein 5 (261 aa).

A signal peptide spans 1-29 (MDLQGRAVPSVDRLRVLLMLFHTMAQIMA). Over 30–234 (EQEVENLSGL…AVDEREQLEE (205 aa)) the chain is Extracellular. N-linked (GlcNAc...) asparagine glycosylation is found at Asn-35, Asn-53, and Asn-126. The helical transmembrane segment at 235 to 255 (TLPLILGLILGLVIVVTLAIY) threads the bilayer. Over 256 to 261 (HVHPQK) the chain is Cytoplasmic.

Belongs to the LAMP family. Glycosylated.

Its subcellular location is the cytoplasmic vesicle membrane. It is found in the cell membrane. The protein localises to the cell projection. It localises to the dendrite. The protein resides in the cytoplasmic vesicle. Its subcellular location is the secretory vesicle. It is found in the synaptic vesicle membrane. The protein localises to the growth cone membrane. It localises to the early endosome membrane. The protein resides in the recycling endosome. Its subcellular location is the endoplasmic reticulum-Golgi intermediate compartment membrane. It is found in the endosome membrane. In terms of biological role, plays a role in short-term synaptic plasticity in a subset of GABAergic neurons in the brain. The chain is Lysosome-associated membrane glycoprotein 5 (LAMP5) from Pongo abelii (Sumatran orangutan).